Here is a 622-residue protein sequence, read N- to C-terminus: Low affinity potassium transport system protein Kup (622 aa).

Helical transmembrane passes span 9–29 (LPAI…TSPL), 49–69 (VFGF…IKYL), 103–123 (VIMG…TPAI), 137–157 (PQLD…LFMI), 165–185 (VGKL…VLGL), 213–233 (VSFI…ALYA), 247–267 (WFTV…ALLL), 276–296 (PFFL…AALA), 337–357 (IYIP…IVSF), 363–383 (LAAA…ILST), 396–416 (FVAL…SANL), and 419–439 (LLSG…IMTT).

This sequence belongs to the HAK/KUP transporter (TC 2.A.72) family.

Its subcellular location is the cell inner membrane. It catalyses the reaction K(+)(in) + H(+)(in) = K(+)(out) + H(+)(out). Responsible for the low-affinity transport of potassium into the cell. Likely operates as a K(+):H(+) symporter. The polypeptide is Low affinity potassium transport system protein Kup (Salmonella typhi).